The chain runs to 364 residues: Phosphoserine aminotransferase (364 aa).

Arg-40 contributes to the L-glutamate binding site. Residues Gly-74–Thr-75, Trp-100, Thr-149, Asp-170, and Gln-193 each bind pyridoxal 5'-phosphate. The residue at position 194 (Lys-194) is an N6-(pyridoxal phosphate)lysine. Residue Asn-235–Thr-236 coordinates pyridoxal 5'-phosphate.

It belongs to the class-V pyridoxal-phosphate-dependent aminotransferase family. SerC subfamily. Homodimer. The cofactor is pyridoxal 5'-phosphate. As to expression, expressed in ovary and head.

It catalyses the reaction O-phospho-L-serine + 2-oxoglutarate = 3-phosphooxypyruvate + L-glutamate. The catalysed reaction is 4-(phosphooxy)-L-threonine + 2-oxoglutarate = (R)-3-hydroxy-2-oxo-4-phosphooxybutanoate + L-glutamate. It functions in the pathway amino-acid biosynthesis; L-serine biosynthesis; L-serine from 3-phospho-D-glycerate: step 2/3. It participates in cofactor biosynthesis; pyridoxine 5'-phosphate biosynthesis; pyridoxine 5'-phosphate from D-erythrose 4-phosphate: step 3/5. Its function is as follows. Catalyzes the reversible conversion of 3-phosphohydroxypyruvate to phosphoserine and of 3-hydroxy-2-oxo-4-phosphonooxybutanoate to phosphohydroxythreonine. This Drosophila melanogaster (Fruit fly) protein is Phosphoserine aminotransferase.